We begin with the raw amino-acid sequence, 492 residues long: Glutamyl-tRNA(Gln) amidotransferase subunit A (492 aa).

Catalysis depends on charge relay system residues lysine 78 and serine 158. Residue serine 182 is the Acyl-ester intermediate of the active site.

It belongs to the amidase family. GatA subfamily. As to quaternary structure, heterotrimer of A, B and C subunits.

The enzyme catalyses L-glutamyl-tRNA(Gln) + L-glutamine + ATP + H2O = L-glutaminyl-tRNA(Gln) + L-glutamate + ADP + phosphate + H(+). Its function is as follows. Allows the formation of correctly charged Gln-tRNA(Gln) through the transamidation of misacylated Glu-tRNA(Gln) in organisms which lack glutaminyl-tRNA synthetase. The reaction takes place in the presence of glutamine and ATP through an activated gamma-phospho-Glu-tRNA(Gln). This Rhodopseudomonas palustris (strain BisB18) protein is Glutamyl-tRNA(Gln) amidotransferase subunit A.